Consider the following 216-residue polypeptide: Ceramide-1-phosphate transfer protein (216 aa).

Residues Asp-56, Lys-60, Arg-108, Arg-112, and His-152 each contribute to the an N-acylsphingoid base 1-phosphate site.

This sequence belongs to the GLTP family.

Its subcellular location is the cytoplasm. The protein resides in the cytosol. It is found in the golgi apparatus. The protein localises to the trans-Golgi network membrane. It localises to the cell membrane. Its subcellular location is the endosome membrane. The protein resides in the nucleus outer membrane. The catalysed reaction is N-(hexadecanoyl)-sphing-4-enine-1-phosphate(in) = N-(hexadecanoyl)-sphing-4-enine-1-phosphate(out). It carries out the reaction N-(9Z-octadecenoyl)-sphing-4-enine-1-phosphate(in) = N-(9Z-octadecenoyl)-sphing-4-enine-1-phosphate(out). Functionally, mediates the intracellular transfer of ceramide-1-phosphate (C1P) between organelle membranes and the cell membrane. Required for normal structure of the Golgi stacks. Can bind phosphoceramides with a variety of aliphatic chains, but has a preference for lipids with saturated C16:0 or monounsaturated C18:1 aliphatic chains, and is inefficient with phosphoceramides containing lignoceryl (C24:0). Plays a role in the regulation of the cellular levels of ceramide-1-phosphate, and thereby contributes to the regulation of phospholipase PLA2G4A activity and the release of arachidonic acid. Has no activity with galactosylceramide, lactosylceramide, sphingomyelin, phosphatidylcholine, phosphatidic acid and ceramide. C1P transfer is stimulated by phosphatidylserine in C1P source vesicles. Regulates autophagy, inflammasome mediated IL1B and IL18 processing, and pyroptosis, but not apoptosis. In Mus musculus (Mouse), this protein is Ceramide-1-phosphate transfer protein.